Here is a 76-residue protein sequence, read N- to C-terminus: Small ribosomal subunit protein bS18 (76 aa).

It belongs to the bacterial ribosomal protein bS18 family. In terms of assembly, part of the 30S ribosomal subunit. Forms a tight heterodimer with protein bS6.

In terms of biological role, binds as a heterodimer with protein bS6 to the central domain of the 16S rRNA, where it helps stabilize the platform of the 30S subunit. The polypeptide is Small ribosomal subunit protein bS18 (Pseudomonas fluorescens (strain ATCC BAA-477 / NRRL B-23932 / Pf-5)).